Consider the following 760-residue polypeptide: Transglutaminase-activating metalloprotease (760 aa).

A signal peptide spans 1-33; that stretch reads MRPTPQRRAVATGALVAVTAMLAVGVQTTSANA. Disordered regions lie at residues 32–59 and 228–265; these read NAGQDKAAHPAPRQSIHKPDPGAEPVKL and KQGTGNSQHSGQVQIGTTKSGSSYQMNDTTRGGHKTYN. The propeptide occupies 34-229; it reads GQDKAAHPAP…KLFEFQGVKQ (196 aa). Over residues 228–257 the composition is skewed to polar residues; the sequence is KQGTGNSQHSGQVQIGTTKSGSSYQMNDTT. His-366 contributes to the Zn(2+) binding site. The active site involves Glu-367. His-370 and Glu-390 together coordinate Zn(2+). Catalysis depends on His-454, which acts as the Proton donor. Residues 640–760 enclose the P/Homo B domain; that stretch reads TVNTTGGGSV…GTIDKWRLTF (121 aa).

It belongs to the peptidase M4 family. Zn(2+) serves as cofactor.

It is found in the secreted. Functionally, cleaves the N-terminal propeptide of transglutaminase thus activating it. The sequence is that of Transglutaminase-activating metalloprotease from Streptomyces mobaraensis (Streptoverticillium mobaraense).